Here is a 500-residue protein sequence, read N- to C-terminus: Probable malate:quinone oxidoreductase (500 aa).

It belongs to the MQO family. FAD serves as cofactor.

The enzyme catalyses (S)-malate + a quinone = a quinol + oxaloacetate. It functions in the pathway carbohydrate metabolism; tricarboxylic acid cycle; oxaloacetate from (S)-malate (quinone route): step 1/1. This Bacillus cereus (strain AH187) protein is Probable malate:quinone oxidoreductase.